A 275-amino-acid chain; its full sequence is 2,3,4,5-tetrahydropyridine-2,6-dicarboxylate N-succinyltransferase (275 aa).

Substrate is bound by residues Arg104 and Asp141.

It belongs to the transferase hexapeptide repeat family. As to quaternary structure, homotrimer.

It localises to the cytoplasm. The enzyme catalyses (S)-2,3,4,5-tetrahydrodipicolinate + succinyl-CoA + H2O = (S)-2-succinylamino-6-oxoheptanedioate + CoA. It participates in amino-acid biosynthesis; L-lysine biosynthesis via DAP pathway; LL-2,6-diaminopimelate from (S)-tetrahydrodipicolinate (succinylase route): step 1/3. This is 2,3,4,5-tetrahydropyridine-2,6-dicarboxylate N-succinyltransferase from Aeromonas hydrophila subsp. hydrophila (strain ATCC 7966 / DSM 30187 / BCRC 13018 / CCUG 14551 / JCM 1027 / KCTC 2358 / NCIMB 9240 / NCTC 8049).